Here is a 275-residue protein sequence, read N- to C-terminus: uncharacterized protein (275 aa).

This is an uncharacterized protein from Acanthamoeba polyphaga mimivirus (APMV).